We begin with the raw amino-acid sequence, 189 residues long: dTTP/UTP pyrophosphatase (189 aa).

D64 (proton acceptor) is an active-site residue.

It belongs to the Maf family. YhdE subfamily. It depends on a divalent metal cation as a cofactor.

It localises to the cytoplasm. It carries out the reaction dTTP + H2O = dTMP + diphosphate + H(+). The enzyme catalyses UTP + H2O = UMP + diphosphate + H(+). Nucleoside triphosphate pyrophosphatase that hydrolyzes dTTP and UTP. May have a dual role in cell division arrest and in preventing the incorporation of modified nucleotides into cellular nucleic acids. In Syntrophomonas wolfei subsp. wolfei (strain DSM 2245B / Goettingen), this protein is dTTP/UTP pyrophosphatase.